Here is a 95-residue protein sequence, read N- to C-terminus: Neutrophil antibiotic peptide NP-4 (95 aa).

The signal sequence occupies residues 1 to 19 (MRTLALLAAILLVTLQAQA). Positions 20–62 (ELHSGMADDGVDQQQPRAQDLDVAVYIKQDETSPLEVLGAKAG) are excised as a propeptide. 3 disulfides stabilise this stretch: cysteine 65–cysteine 93, cysteine 67–cysteine 82, and cysteine 72–cysteine 92.

It belongs to the alpha-defensin family.

Its subcellular location is the secreted. Its function is as follows. Microbicidal activity. The sequence is that of Neutrophil antibiotic peptide NP-4 from Oryctolagus cuniculus (Rabbit).